We begin with the raw amino-acid sequence, 633 residues long: Telomere-binding protein 1 (633 aa).

The interval 253-272 (HAADRDDDENSSGCVHPSTS) is disordered. Positions 263-272 (SSGCVHPSTS) are enriched in polar residues. The Ubiquitin-like domain occupies 351-430 (VKLTIKSFNI…LNDIGFTLEC (80 aa)). The sufficient for telomeric DNA binding stretch occupies residues 506-615 (PFADPNSLAL…RVLAAQAYWS (110 aa)). One can recognise an HTH myb-type domain in the interval 529–588 (GQRRIRRPFTVAEVELLVEAVEHLGTGRWRDVKFRAFENVHHRTYVDLKDKWKTLVHTAS). The 51-residue stretch at 534-584 (RRPFTVAEVELLVEAVEHLGTGRWRDVKFRAFENVHHRTYVDLKDKWKTLV) folds into the SANT domain. A DNA-binding region (H-T-H motif) is located at residues 557-584 (WRDVKFRAFENVHHRTYVDLKDKWKTLV).

In terms of assembly, homodimer. As to expression, ubiquitous.

The protein localises to the chromosome. It is found in the telomere. In terms of biological role, binds the telomeric double-stranded 5'TTTAGGG-3' repeat and regulates telomere length and structure. In Oryza sativa subsp. japonica (Rice), this protein is Telomere-binding protein 1 (TBP1).